Reading from the N-terminus, the 300-residue chain is Solute carrier family 25 member 35 (300 aa).

Solcar repeat units follow at residues 1–90 (MDFL…AESR), 100–193 (HSPV…IKDL), and 203–294 (QSWK…LRSF). The next 6 helical transmembrane spans lie at 38 to 58 (TYQR…KVDG), 59 to 79 (LAAL…MNGI), 91 to 119 (GYLH…GAYL), 169 to 190 (AVGG…FSSI), 205 to 225 (WKVA…AMTP), and 277 to 300 (LGPH…TYAK).

The protein belongs to the mitochondrial carrier (TC 2.A.29) family.

The protein resides in the mitochondrion inner membrane. It catalyses the reaction a dicarboxylate(in) + sulfate(out) = a dicarboxylate(out) + sulfate(in). In terms of biological role, putative antiporter that exchanges dicarboxylates and sulfur oxoanions across the inner membrane of mitochondria. This Mus musculus (Mouse) protein is Solute carrier family 25 member 35 (Slc25a35).